A 610-amino-acid polypeptide reads, in one-letter code: Atypical kinase COQ8, mitochondrial (610 aa).

A compositionally biased stretch (basic and acidic residues) spans G98 to K111. A disordered region spans residues G98–S144.

Belongs to the protein kinase superfamily. ADCK protein kinase family.

Its subcellular location is the mitochondrion. The protein operates within cofactor biosynthesis; ubiquinone biosynthesis. Functionally, atypical kinase involved in the biosynthesis of coenzyme Q, also named ubiquinone, an essential lipid-soluble electron transporter for aerobic cellular respiration. Its substrate specificity is still unclear: may act as a protein kinase that mediates phosphorylation of coq3. According to other reports, acts as a small molecule kinase, possibly a lipid kinase that phosphorylates a prenyl lipid in the ubiquinone biosynthesis pathway, as suggested by its ability to bind coenzyme Q lipid intermediates. The protein is Atypical kinase COQ8, mitochondrial of Schizosaccharomyces pombe (strain 972 / ATCC 24843) (Fission yeast).